Here is a 282-residue protein sequence, read N- to C-terminus: Endochitinase 4 (282 aa).

The GH18 domain maps to 1–282 (GAKNGVHPPL…TWSINWDGSK (282 aa)). Glutamate 112 (proton donor) is an active-site residue. Residue asparagine 265 is glycosylated (N-linked (GlcNAc...) asparagine).

Belongs to the glycosyl hydrolase 18 family. Chitinase class V subfamily.

Its subcellular location is the secreted. It catalyses the reaction Random endo-hydrolysis of N-acetyl-beta-D-glucosaminide (1-&gt;4)-beta-linkages in chitin and chitodextrins.. Its function is as follows. Secreted chitinase involved in the degradation of chitin, a component of the cell walls of fungi and exoskeletal elements of some animals (including worms and arthropods). Participates in the infection process and directly acts in the penetration process of the host cuticle. The chain is Endochitinase 4 (chi4) from Metarhizium anisopliae (Entomophthora anisopliae).